The chain runs to 232 residues: Clarin-1 (232 aa).

The chain crosses the membrane as a helical span at residues 8-28 (IIFCMAGVFSFACALGVVTAL). The N-linked (GlcNAc...) asparagine glycan is linked to asparagine 48. A run of 3 helical transmembrane segments spans residues 101-121 (VILF…FFMY), 135-155 (LGLY…MILF), and 186-206 (TTSF…GLLI).

The protein belongs to the clarin family. As to expression, widely expressed. Found in the retina.

It is found in the cell membrane. May have a role in the excitatory ribbon synapse junctions between hair cells and cochlear ganglion cells and presumably also in analogous synapses within the retina. This is Clarin-1 (CLRN1) from Homo sapiens (Human).